The chain runs to 277 residues: Shikimate dehydrogenase (NADP(+)) (277 aa).

Shikimate is bound by residues 17-19 (SRS) and Thr64. Lys68 serves as the catalytic Proton acceptor. Shikimate is bound by residues Asn88 and Asp103. Residues 128–132 (GAGGS) and Leu217 each bind NADP(+). A shikimate-binding site is contributed by Tyr219. Residue Gly240 participates in NADP(+) binding.

This sequence belongs to the shikimate dehydrogenase family. Homodimer.

It catalyses the reaction shikimate + NADP(+) = 3-dehydroshikimate + NADPH + H(+). The protein operates within metabolic intermediate biosynthesis; chorismate biosynthesis; chorismate from D-erythrose 4-phosphate and phosphoenolpyruvate: step 4/7. Involved in the biosynthesis of the chorismate, which leads to the biosynthesis of aromatic amino acids. Catalyzes the reversible NADPH linked reduction of 3-dehydroshikimate (DHSA) to yield shikimate (SA). The chain is Shikimate dehydrogenase (NADP(+)) from Afipia carboxidovorans (strain ATCC 49405 / DSM 1227 / KCTC 32145 / OM5) (Oligotropha carboxidovorans).